Reading from the N-terminus, the 145-residue chain is tRNA-specific adenosine deaminase (145 aa).

One can recognise a CMP/dCMP-type deaminase domain in the interval 1–116; that stretch reads MREALKQAEI…SNLRYFNSKA (116 aa). Histidine 48 lines the Zn(2+) pocket. Glutamate 50 functions as the Proton donor in the catalytic mechanism. Cysteine 78 and cysteine 81 together coordinate Zn(2+).

It belongs to the cytidine and deoxycytidylate deaminase family. As to quaternary structure, homodimer. Zn(2+) serves as cofactor.

The enzyme catalyses adenosine(34) in tRNA + H2O + H(+) = inosine(34) in tRNA + NH4(+). Functionally, catalyzes the deamination of adenosine to inosine at the wobble position 34 of tRNA(Arg2). The protein is tRNA-specific adenosine deaminase of Rickettsia bellii (strain RML369-C).